A 160-amino-acid chain; its full sequence is Inorganic pyrophosphatase (160 aa).

Residues Lys16, Arg28, and Tyr40 each coordinate substrate. 3 residues coordinate Mg(2+): Asp50, Asp55, and Asp87. Tyr126 is a binding site for substrate.

The protein belongs to the PPase family. Homohexamer. Requires Mg(2+) as cofactor.

The protein resides in the cytoplasm. The catalysed reaction is diphosphate + H2O = 2 phosphate + H(+). In terms of biological role, catalyzes the hydrolysis of inorganic pyrophosphate (PPi) forming two phosphate ions. The polypeptide is Inorganic pyrophosphatase (Nanoarchaeum equitans (strain Kin4-M)).